The chain runs to 173 residues: Transmembrane protein 278 (173 aa).

Acidic residues predominate over residues 1–14; sequence MSEQERETEEDEGV. The segment at 1 to 25 is disordered; that stretch reads MSEQERETEEDEGVASDTAPMLPRR. Helical transmembrane passes span 31–51, 53–73, and 107–127; these read HISV…VLSG, ALVG…LVLL, and AALI…AAAA. The disordered stretch occupies residues 141–165; it reads DPARTPAPRRPPRSSGDLADGHPDE.

The protein belongs to the TMEM88 family.

The protein resides in the membrane. In Mus musculus (Mouse), this protein is Transmembrane protein 278 (Tmem278).